Consider the following 399-residue polypeptide: Organelle RRM domain-containing protein 1, chloroplastic (399 aa).

The transit peptide at 1–52 (MDAARASLLLAGGLAVSTSTSAVATAAQTVSIPHLSPHTRRRRQRRFLRLAS) directs the protein to the chloroplast. Residues 295–373 (KRLFVTGLSF…WMIVVDVAKH (79 aa)) enclose the RRM domain. Residues 377 to 399 (DRQPPYSASGRSNQVLRSRYHTG) form a disordered region.

The protein resides in the plastid. It is found in the chloroplast. In terms of biological role, involved in C-to-U editing of chloroplastic RNA. Functions as major chloroplastic editing factor. Controls a majority of the chloroplastic editing sites. The protein is Organelle RRM domain-containing protein 1, chloroplastic of Oryza sativa subsp. japonica (Rice).